Here is a 308-residue protein sequence, read N- to C-terminus: tRNA dimethylallyltransferase (308 aa).

14 to 21 contributes to the ATP binding site; the sequence is GPTASGKT. Position 16–21 (16–21) interacts with substrate; it reads TASGKT. Interaction with substrate tRNA regions lie at residues 39 to 42, 163 to 167, and 244 to 249; these read DSAL, QRLSR, and RCVGYR.

The protein belongs to the IPP transferase family. As to quaternary structure, monomer. Mg(2+) serves as cofactor.

The catalysed reaction is adenosine(37) in tRNA + dimethylallyl diphosphate = N(6)-dimethylallyladenosine(37) in tRNA + diphosphate. Catalyzes the transfer of a dimethylallyl group onto the adenine at position 37 in tRNAs that read codons beginning with uridine, leading to the formation of N6-(dimethylallyl)adenosine (i(6)A). The polypeptide is tRNA dimethylallyltransferase (Shewanella loihica (strain ATCC BAA-1088 / PV-4)).